A 285-amino-acid polypeptide reads, in one-letter code: Bifunctional protein FolD (285 aa).

Residues 165 to 167 (GRG), T192, and V233 each bind NADP(+).

Belongs to the tetrahydrofolate dehydrogenase/cyclohydrolase family. As to quaternary structure, homodimer.

It carries out the reaction (6R)-5,10-methylene-5,6,7,8-tetrahydrofolate + NADP(+) = (6R)-5,10-methenyltetrahydrofolate + NADPH. It catalyses the reaction (6R)-5,10-methenyltetrahydrofolate + H2O = (6R)-10-formyltetrahydrofolate + H(+). It participates in one-carbon metabolism; tetrahydrofolate interconversion. Functionally, catalyzes the oxidation of 5,10-methylenetetrahydrofolate to 5,10-methenyltetrahydrofolate and then the hydrolysis of 5,10-methenyltetrahydrofolate to 10-formyltetrahydrofolate. This chain is Bifunctional protein FolD, found in Corynebacterium jeikeium (strain K411).